The primary structure comprises 327 residues: MYQSLMTVRETQIAIKEVKTFFEDQLAKRLGLFRVSAPLFVTKKSGLNDHLNGVERPIEFDMLHSGEELEIVHSLAKWKRFALHEYGYEAGEGLYTNMNAIRRDEELDATHSIYVDQWDWEKIVQKEWRTVEYLQETVRTIYGIFKDLEDHLFEKYPFLGKYLPEDIAFITSQELEDKYPELTPKEREHAIAKEYGAVFIIGIGDVLRSGEKHDGRAADYDDWKLNGDILFWHPVLQSSFELSSMGIRVDSQSLDEQLTKAGEDFKRDYDFHKGILEDVLPLTIGGGIGQSRMCMYFLRKAHIGEVQSSVWPDEMREACKKENIHLF.

This sequence belongs to the class-II aminoacyl-tRNA synthetase family. AsnA subfamily.

Its subcellular location is the cytoplasm. It carries out the reaction L-aspartate + NH4(+) + ATP = L-asparagine + AMP + diphosphate + H(+). It functions in the pathway amino-acid biosynthesis; L-asparagine biosynthesis; L-asparagine from L-aspartate (ammonia route): step 1/1. The chain is Aspartate--ammonia ligase from Bacillus cytotoxicus (strain DSM 22905 / CIP 110041 / 391-98 / NVH 391-98).